The primary structure comprises 1017 residues: MRRNVSDHAEKKDKVGVEVLLELPKTLSKSNKKWQLALIKLYCSRTLLNCAKHAIRKPGLFPRSLSYTAIDLDHHHGDDHFKIDTETLNDLVKNKNQEKLESLGGPNGLVSALKSNTRLGINEEGDEIQRRRSTFGSNTYTRQPSKGLFHFVVEAFKDLTILILLGCATLSLGFGIKEHGLKEGWYDGGSIFVAVFLVVAVSAVSNFRQNRQFDKLSKVSSNIKIDVVRNGRRQEISIFDIVVGDIVCLNIGDQVPADGVFVEGHLLHVDESSMTGESDHVEVSLTGNTFLFSGTKIADGFGKMAVTSVGMNTAWGQMMSHISRDTNEQTPLQSRLDKLTSSIGKVGLLVAFLVLLVLLIRYFTGTTKDESGNREYNGKTTKSDEIVNAVVKMVAAAVTIIVVAIPEGLPLAVTLTLAYSMKRMMKDNAMVRKLSACETMGSATVICTDKTGTLTLNQMKVTDFWFGLESGKASSVSQRVVELFHQGVAMNTTGSVFKAKAGTEYEFSGSPTEKAILSWAVEELEMGMEKVIEEHDVVHVEGFNSEKKRSGVLMKKKGVNTENNVVHWKGAAEKILAMCSTFCDGSGVVREMKEDDKIQFEKIIQSMAAKSLRCIAFAYSEDNEDNKKLKEEKLSLLGIIGIKDPCRPGVKKAVEDCQFAGVNIKMITGDNIFTARAIAVECGILTPEDEMNSEAVLEGEKFRNYTQEERLEKVERIKVMARSSPFDKLLMVKCLKELGHVVAVTGDGTNDAPALKEADIGLSMGIQGTEVAKESSDIVILDDNFASVATVLKWGRCVYNNIQKFIQFQLTVNVAALVINFVAAVSAGDVPLTAVQLLWVNLIMDTLGALALATEKPTNDLMKKKPIGRVAPLITNIMWRNLLAQAFYQISVLLVLQFRGRSIFNVTEKVKNTLIFNTFVLCQVFNEFNARSLEKKNVFKGLHKNRLFIGIIVVTVVLQVVMVEFLKRFADTERLNLGQWGVCIAIAAASWPIGWLVKSVPVPERHFFSYLKWKKRS.

At Met1 the chain carries N-acetylmethionine. Residues Met1 to Gly147 are Cytoplasmic-facing. The tract at residues Leu20 to Asn31 is interaction with calmodulin. A helical transmembrane segment spans residues Leu148 to Ala168. Residues Thr169–Tyr186 are Lumenal-facing. A helical membrane pass occupies residues Asp187–Phe207. Residues Arg208 to Leu336 are Cytoplasmic-facing. Residues Asp337–Leu356 traverse the membrane as a helical segment. Residues Val357–Met393 lie on the Lumenal side of the membrane. A helical membrane pass occupies residues Val394 to Leu411. The Cytoplasmic segment spans residues Ala412–Ile802. Asp449 acts as the 4-aspartylphosphate intermediate in catalysis. Mg(2+) is bound by residues Asp747 and Asp751. The chain crosses the membrane as a helical span at residues Gln803 to Phe821. Residues Val822 to Leu832 are Lumenal-facing. The chain crosses the membrane as a helical span at residues Thr833–Ala853. Residues Thr854–Leu873 lie on the Cytoplasmic side of the membrane. Residues Ile874–Leu896 traverse the membrane as a helical segment. The Lumenal portion of the chain corresponds to Gln897–Asn905. Residues Val906–Asn926 traverse the membrane as a helical segment. Over Glu927–Lys944 the chain is Cytoplasmic. Residues Asn945 to Leu966 traverse the membrane as a helical segment. The Lumenal segment spans residues Lys967 to Asn976. The chain crosses the membrane as a helical span at residues Leu977–Lys998. Topologically, residues Ser999 to Val1002 are cytoplasmic.

Belongs to the cation transport ATPase (P-type) (TC 3.A.3) family. Type IIB subfamily.

The protein localises to the membrane. It carries out the reaction Ca(2+)(in) + ATP + H2O = Ca(2+)(out) + ADP + phosphate + H(+). With respect to regulation, activated by calmodulin. Its function is as follows. This magnesium-dependent enzyme catalyzes the hydrolysis of ATP coupled with the translocation of calcium from the cytosol out of the cell or into organelles. The sequence is that of Putative calcium-transporting ATPase 13, plasma membrane-type (ACA13) from Arabidopsis thaliana (Mouse-ear cress).